Reading from the N-terminus, the 311-residue chain is Transcriptional regulatory protein MoaR1 (311 aa).

A DNA-binding region (ompR/PhoB-type) is located at residues 15–117 (LNATTAGAVQ…SEPPGYRLLI (103 aa)).

The protein belongs to the AfsR/DnrI/RedD regulatory family.

Acts as a positive transcriptional regulator of the molybdopterin biosynthesis moa1 locus, promoting the expression of the moaA1B1C1D1 genes. Binds directly to the moaA1 promoter. The chain is Transcriptional regulatory protein MoaR1 (moaR1) from Mycobacterium tuberculosis (strain ATCC 25618 / H37Rv).